The chain runs to 647 residues: UvrABC system protein C (647 aa).

Residues 16–95 (VEPGVYRFRD…IKEFDPRFNI (80 aa)) form the GIY-YIG domain. In terms of domain architecture, UVR spans 208–243 (DRYARDLERKMSAAAEQLDFERAARLRDDLFALKRA).

The protein belongs to the UvrC family. As to quaternary structure, interacts with UvrB in an incision complex.

The protein localises to the cytoplasm. Functionally, the UvrABC repair system catalyzes the recognition and processing of DNA lesions. UvrC both incises the 5' and 3' sides of the lesion. The N-terminal half is responsible for the 3' incision and the C-terminal half is responsible for the 5' incision. This is UvrABC system protein C from Mycobacterium leprae (strain Br4923).